A 152-amino-acid chain; its full sequence is UPF0266 membrane protein YobD (152 aa).

3 helical membrane-spanning segments follow: residues 6–26 (LLLI…QFIM), 45–65 (VDSV…VTSH), and 67–87 (AQMT…IFWI).

This sequence belongs to the UPF0266 family.

Its subcellular location is the cell inner membrane. This chain is UPF0266 membrane protein YobD, found in Salmonella paratyphi C (strain RKS4594).